Consider the following 158-residue polypeptide: uncharacterized protein (158 aa).

Residues 1–18 (MDLASEITSATQTSSLCS) show a composition bias toward polar residues. 3 disordered regions span residues 1–20 (MDLASEITSATQTSSLCSSG), 66–94 (LRDLSRRGSTSSSRSPSRPVSTSASKPCL), and 111–158 (GSSG…GEEF). Positions 72–90 (RGSTSSSRSPSRPVSTSAS) are enriched in low complexity. 2 stretches are compositionally biased toward polar residues: residues 111 to 120 (GSSGHLQSPG) and 149 to 158 (LSHSAQGEEF).

This is an uncharacterized protein from Homo sapiens (Human).